The following is a 556-amino-acid chain: 2-succinyl-5-enolpyruvyl-6-hydroxy-3-cyclohexene-1-carboxylate synthase (556 aa).

The protein belongs to the TPP enzyme family. MenD subfamily. Homodimer. Requires Mg(2+) as cofactor. It depends on Mn(2+) as a cofactor. Thiamine diphosphate is required as a cofactor.

The enzyme catalyses isochorismate + 2-oxoglutarate + H(+) = 5-enolpyruvoyl-6-hydroxy-2-succinyl-cyclohex-3-ene-1-carboxylate + CO2. Its pathway is quinol/quinone metabolism; 1,4-dihydroxy-2-naphthoate biosynthesis; 1,4-dihydroxy-2-naphthoate from chorismate: step 2/7. The protein operates within quinol/quinone metabolism; menaquinone biosynthesis. Functionally, catalyzes the thiamine diphosphate-dependent decarboxylation of 2-oxoglutarate and the subsequent addition of the resulting succinic semialdehyde-thiamine pyrophosphate anion to isochorismate to yield 2-succinyl-5-enolpyruvyl-6-hydroxy-3-cyclohexene-1-carboxylate (SEPHCHC). This chain is 2-succinyl-5-enolpyruvyl-6-hydroxy-3-cyclohexene-1-carboxylate synthase, found in Shigella sonnei (strain Ss046).